The chain runs to 93 residues: Phosphoribosyl-ATP pyrophosphatase (93 aa).

This sequence belongs to the PRA-PH family.

It is found in the cytoplasm. The catalysed reaction is 1-(5-phospho-beta-D-ribosyl)-ATP + H2O = 1-(5-phospho-beta-D-ribosyl)-5'-AMP + diphosphate + H(+). Its pathway is amino-acid biosynthesis; L-histidine biosynthesis; L-histidine from 5-phospho-alpha-D-ribose 1-diphosphate: step 2/9. This chain is Phosphoribosyl-ATP pyrophosphatase, found in Mycolicibacterium vanbaalenii (strain DSM 7251 / JCM 13017 / BCRC 16820 / KCTC 9966 / NRRL B-24157 / PYR-1) (Mycobacterium vanbaalenii).